Reading from the N-terminus, the 425-residue chain is Serine--tRNA ligase (425 aa).

230-232 (TAE) lines the L-serine pocket. 261-263 (RSE) is a binding site for ATP. E284 contributes to the L-serine binding site. 348 to 351 (EISS) provides a ligand contact to ATP. S384 contacts L-serine.

This sequence belongs to the class-II aminoacyl-tRNA synthetase family. Type-1 seryl-tRNA synthetase subfamily. In terms of assembly, homodimer. The tRNA molecule binds across the dimer.

Its subcellular location is the cytoplasm. It carries out the reaction tRNA(Ser) + L-serine + ATP = L-seryl-tRNA(Ser) + AMP + diphosphate + H(+). The enzyme catalyses tRNA(Sec) + L-serine + ATP = L-seryl-tRNA(Sec) + AMP + diphosphate + H(+). It functions in the pathway aminoacyl-tRNA biosynthesis; selenocysteinyl-tRNA(Sec) biosynthesis; L-seryl-tRNA(Sec) from L-serine and tRNA(Sec): step 1/1. Functionally, catalyzes the attachment of serine to tRNA(Ser). Is also able to aminoacylate tRNA(Sec) with serine, to form the misacylated tRNA L-seryl-tRNA(Sec), which will be further converted into selenocysteinyl-tRNA(Sec). This is Serine--tRNA ligase from Streptococcus pyogenes serotype M4 (strain MGAS10750).